A 181-amino-acid polypeptide reads, in one-letter code: Gastrokine-3 (181 aa).

The N-terminal stretch at M1 to A20 is a signal peptide. Residues N53 to A145 form the BRICHOS domain. C80 and C137 are joined by a disulfide.

It belongs to the gastrokine family.

Its subcellular location is the secreted. In terms of biological role, may inhibit gastric epithelial cell proliferation. The chain is Gastrokine-3 (GKN3P) from Homo sapiens (Human).